The chain runs to 485 residues: Retron Mx162 reverse transcriptase (485 aa).

Residues 1-33 (MTARLDPFVPAASPQAVPTPELTAPSSDAAAKR) form a disordered region. Residues 167–407 (RWFAFHREVD…TRQRVTGLVV (241 aa)) form the Reverse transcriptase domain. Positions 250, 346, and 347 each coordinate Mg(2+).

Belongs to the bacterial reverse transcriptase family.

The enzyme catalyses DNA(n) + a 2'-deoxyribonucleoside 5'-triphosphate = DNA(n+1) + diphosphate. MsDNA synthesis is inhibited by rifampicin and chloramphenicol. Its function is as follows. Reverse transcriptase (RT) responsible for synthesis of msDNA-Mx162 (a branched molecule with RNA linked by a 2',5'-phosphodiester bond to ssDNA). The retron transcript serves as primer (from a conserved internal G residue) and template for the reaction, and codes for the RT. The retron is involved in antiviral defense. The protein is Retron Mx162 reverse transcriptase of Myxococcus xanthus.